A 230-amino-acid chain; its full sequence is Ribonuclease 3 (230 aa).

In terms of domain architecture, RNase III spans 5–125 (YSRLYKILGY…IIGAIYLDSD (121 aa)). Glu-40 is a binding site for Mg(2+). Asp-44 is an active-site residue. Residues Asp-111 and Glu-114 each contribute to the Mg(2+) site. Residue Glu-114 is part of the active site. The region spanning 153–223 (DSKSKLQEIL…AEKMIQILSQ (71 aa)) is the DRBM domain.

Belongs to the ribonuclease III family. In terms of assembly, homodimer. Mg(2+) is required as a cofactor.

Its subcellular location is the cytoplasm. The catalysed reaction is Endonucleolytic cleavage to 5'-phosphomonoester.. In terms of biological role, digests double-stranded RNA. Involved in the processing of primary rRNA transcript to yield the immediate precursors to the large and small rRNAs (23S and 16S). Processes some mRNAs, and tRNAs when they are encoded in the rRNA operon. Processes pre-crRNA and tracrRNA of type II CRISPR loci if present in the organism. The sequence is that of Ribonuclease 3 from Francisella philomiragia subsp. philomiragia (strain ATCC 25017 / CCUG 19701 / FSC 153 / O#319-036).